A 117-amino-acid chain; its full sequence is Large ribosomal subunit protein bL19 (117 aa).

Belongs to the bacterial ribosomal protein bL19 family.

Its function is as follows. This protein is located at the 30S-50S ribosomal subunit interface and may play a role in the structure and function of the aminoacyl-tRNA binding site. The sequence is that of Large ribosomal subunit protein bL19 from Vibrio campbellii (strain ATCC BAA-1116).